The chain runs to 348 residues: Ribosomal RNA small subunit methyltransferase C (348 aa).

The protein belongs to the methyltransferase superfamily. RsmC family. In terms of assembly, monomer.

Its subcellular location is the cytoplasm. The catalysed reaction is guanosine(1207) in 16S rRNA + S-adenosyl-L-methionine = N(2)-methylguanosine(1207) in 16S rRNA + S-adenosyl-L-homocysteine + H(+). Its function is as follows. Specifically methylates the guanine in position 1207 of 16S rRNA in the 30S particle. The polypeptide is Ribosomal RNA small subunit methyltransferase C (Pectobacterium atrosepticum (strain SCRI 1043 / ATCC BAA-672) (Erwinia carotovora subsp. atroseptica)).